Here is a 115-residue protein sequence, read N- to C-terminus: DNA-directed RNA polymerase subunit omega (115 aa).

The protein belongs to the RNA polymerase subunit omega family. In terms of assembly, the RNAP catalytic core consists of 2 alpha, 1 beta, 1 beta' and 1 omega subunit. When a sigma factor is associated with the core the holoenzyme is formed, which can initiate transcription.

The enzyme catalyses RNA(n) + a ribonucleoside 5'-triphosphate = RNA(n+1) + diphosphate. Functionally, promotes RNA polymerase assembly. Latches the N- and C-terminal regions of the beta' subunit thereby facilitating its interaction with the beta and alpha subunits. This Cutibacterium acnes (strain DSM 16379 / KPA171202) (Propionibacterium acnes) protein is DNA-directed RNA polymerase subunit omega.